Reading from the N-terminus, the 652-residue chain is Aspartate--tRNA ligase, mitochondrial (652 aa).

Residues 1–46 constitute a mitochondrion transit peptide; the sequence is MYLGSWLNRLGRGLSRPIGKTKQPIWGSLSRSLTLSSQRVPEFSSF. T218 carries the post-translational modification Phosphothreonine. Position 241 is a phosphoserine (S241). Residues 243 to 246 are aspartate; sequence QQFK. Residue R265 participates in L-aspartate binding. ATP contacts are provided by residues 265–267 and E534; that span reads RDE. R541 lines the L-aspartate pocket. An ATP-binding site is contributed by 583-586; sequence GLDR.

The protein belongs to the class-II aminoacyl-tRNA synthetase family. Type 1 subfamily. In terms of assembly, homodimer.

It localises to the mitochondrion matrix. It is found in the mitochondrion membrane. It carries out the reaction tRNA(Asp) + L-aspartate + ATP = L-aspartyl-tRNA(Asp) + AMP + diphosphate. Functionally, catalyzes the attachment of aspartate to tRNA(Asp) in a two-step reaction: aspartate is first activated by ATP to form Asp-AMP and then transferred to the acceptor end of tRNA(Asp). The polypeptide is Aspartate--tRNA ligase, mitochondrial (Dars2) (Rattus norvegicus (Rat)).